The sequence spans 448 residues: Putative diacyglycerol O-acyltransferase MT3848 (448 aa).

The Proton acceptor role is filled by His136.

Belongs to the long-chain O-acyltransferase family.

It carries out the reaction an acyl-CoA + a 1,2-diacyl-sn-glycerol = a triacyl-sn-glycerol + CoA. It participates in glycerolipid metabolism; triacylglycerol biosynthesis. This is Putative diacyglycerol O-acyltransferase MT3848 from Mycobacterium tuberculosis (strain CDC 1551 / Oshkosh).